A 479-amino-acid chain; its full sequence is D-hydantoinase/dihydropyrimidinase (479 aa).

The Zn(2+) site is built by His-59, His-61, and Lys-150. At Lys-150 the chain carries N6-carboxylysine. Tyr-155 provides a ligand contact to substrate. The Zn(2+) site is built by His-183 and His-239. Residue Ser-289 participates in substrate binding. Zn(2+) is bound at residue Asp-316. Asn-337 contributes to the substrate binding site.

The protein belongs to the metallo-dependent hydrolases superfamily. Hydantoinase/dihydropyrimidinase family. In terms of assembly, homotetramer. Zn(2+) serves as cofactor. Carboxylation allows a single lysine to coordinate two zinc ions.

The catalysed reaction is 5,6-dihydrouracil + H2O = 3-(carbamoylamino)propanoate + H(+). Catalyzes the hydrolysis of dihydropyrimidines and of the structurally related DL-5-mono-substituted hydantoins, to produce N-carbamoyl-D-amino acids. The chain is D-hydantoinase/dihydropyrimidinase (dht) from Pseudomonas aeruginosa (strain ATCC 15692 / DSM 22644 / CIP 104116 / JCM 14847 / LMG 12228 / 1C / PRS 101 / PAO1).